A 380-amino-acid chain; its full sequence is MAIEMLGLILAGGQGTRLGKLTKDVAKPAVPFGGRYRIIDFALSNCANSNVKNVGVITQYQPLTLNAHIGNGAPWGLNGINRGVTILQPYFSQEGSKWFEGTSHAVYQNISYIDQQNPEYVLILSGDHIYKMDYEAMLESHKEREASLTVSVMEVPLEEASRFGIMNTDDNDRIIEFEEKPKEPKSNLASMGIYIFNWKRLREVLVNGYSKGNPMEDFGGDVIPAYIEAGENVFAYRFKGYWKDVGTIDSLHQSSMEFLDLNNELNITDKSWRIYSHNDISAPQFITEKSKVKNALVGDGCYVDGTVIHSILSQNVHVQEGTTIEDSFIMSGTFIGENVTIKNAIIGENAKIGDNVEIIGEDEVAVIGHGEIKGENKNEQ.

Alpha-D-glucose 1-phosphate-binding positions include Gly-164, 179–180 (EK), and Ser-190.

The protein belongs to the bacterial/plant glucose-1-phosphate adenylyltransferase family. Homotetramer.

It carries out the reaction alpha-D-glucose 1-phosphate + ATP + H(+) = ADP-alpha-D-glucose + diphosphate. It functions in the pathway glycan biosynthesis; glycogen biosynthesis. Involved in the biosynthesis of ADP-glucose, a building block required for the elongation reactions to produce glycogen. Catalyzes the reaction between ATP and alpha-D-glucose 1-phosphate (G1P) to produce pyrophosphate and ADP-Glc. This Lactococcus lactis subsp. cremoris (strain MG1363) protein is Glucose-1-phosphate adenylyltransferase.